Here is a 144-residue protein sequence, read N- to C-terminus: Large ribosomal subunit protein uL13 (144 aa).

The protein belongs to the universal ribosomal protein uL13 family. As to quaternary structure, part of the 50S ribosomal subunit.

This protein is one of the early assembly proteins of the 50S ribosomal subunit, although it is not seen to bind rRNA by itself. It is important during the early stages of 50S assembly. The sequence is that of Large ribosomal subunit protein uL13 from Mycoplasma mobile (strain ATCC 43663 / 163K / NCTC 11711) (Mesomycoplasma mobile).